The sequence spans 204 residues: Guanylate kinase (204 aa).

The 179-residue stretch at 4–182 folds into the Guanylate kinase-like domain; the sequence is GMLVVVSGPS…AVNDLEAVLT (179 aa). ATP is bound at residue 11-18; sequence GPSGAGKG.

It belongs to the guanylate kinase family.

It is found in the cytoplasm. It catalyses the reaction GMP + ATP = GDP + ADP. Its function is as follows. Essential for recycling GMP and indirectly, cGMP. This is Guanylate kinase from Carboxydothermus hydrogenoformans (strain ATCC BAA-161 / DSM 6008 / Z-2901).